A 545-amino-acid chain; its full sequence is Afadin- and alpha-actinin-binding protein B (545 aa).

Coiled-coil stretches lie at residues 106–287 (RSKE…SQRK) and 358–442 (ARGD…AIRL). Residues 497-545 (HDRHLASSGDHYQRPRKTLPITPSSKHSLTQRESVAWRDSSISPNGTDF) are disordered. 2 stretches are compositionally biased toward polar residues: residues 517 to 529 (ITPSSKHSLTQRE) and 536 to 545 (SSISPNGTDF).

Belongs to the ADIP family. In terms of assembly, interacts with WRAP73.

Its subcellular location is the cell junction. The protein localises to the adherens junction. It localises to the cytoplasm. It is found in the cytoskeleton. The protein resides in the microtubule organizing center. Its subcellular location is the centrosome. The protein localises to the centriolar satellite. Functionally, belongs to an adhesion system, which plays a role in the organization of homotypic, interneuronal and heterotypic cell-cell adherens junctions (AJs). Involved in cell movement. Acts as a centrosome maturation factor, probably by maintaining the integrity of the pericentriolar material and proper microtubule nucleation at mitotic spindle poles. The function seems to implicate at least in part WRAP73; the SSX2IP:WRAP73 complex is proposed to act as regulator of spindle anchoring at the mitotic centrosome. The protein is Afadin- and alpha-actinin-binding protein B (ssx2ip-b) of Xenopus laevis (African clawed frog).